We begin with the raw amino-acid sequence, 547 residues long: Glucose-6-phosphate isomerase (547 aa).

The Proton donor role is filled by Glu-353. Residues His-384 and Lys-512 contribute to the active site.

This sequence belongs to the GPI family.

It localises to the cytoplasm. The catalysed reaction is alpha-D-glucose 6-phosphate = beta-D-fructose 6-phosphate. It functions in the pathway carbohydrate biosynthesis; gluconeogenesis. The protein operates within carbohydrate degradation; glycolysis; D-glyceraldehyde 3-phosphate and glycerone phosphate from D-glucose: step 2/4. Its function is as follows. Catalyzes the reversible isomerization of glucose-6-phosphate to fructose-6-phosphate. The polypeptide is Glucose-6-phosphate isomerase (Campylobacter jejuni subsp. doylei (strain ATCC BAA-1458 / RM4099 / 269.97)).